The following is an 852-amino-acid chain: MRARETRKNYQCLWRWGTMLLGMLMICSAAENLWVTVYYGVPVWKDATTTLFCASDAKAYDTEVHNVWATHACVPTDPNPQEVVLGNVTENFNMWKNNMVDQMHEDIVSLWDQSLKPCVKLTPLCVTLNCTDYLGNATNTNNSSGGTVEKEEIKNCSFNITTGIRDKVQKAYAYFYKLDVVPIDDDNTNTSYRLIHCNSSVITQTCPKVSFEPIPIHYCAPAGFAILKCNNKKFSGKGQCTNVSTVQCTHGIKPVVSTQLLLNGSLAEEEVVIRSDNFTNNAKTILVQLNVSVEINCTRPNNNRRRRITSGPGKVLYTTGEIIGDIRKAYCNISRAKWNKTLEQVATKLREQFGNKTIVFKQSSGGDPEIVMHSFNCRGEFFYCNTTKLFNSTWNENSTWNATGNDTITLPCRIKQIINMWQEVGKAMYAPPIEGQIRCSSNITGLLLTRDGGGDKNSTTEIFRPAGGNMKDNWRSELYKYKVVKIEPLGVAPTKAKRRVVQREKRAVGVIGAMFLGFLGAAGSTMGAASITLTVQARKLLSGIVQQQNNLLRAIEAQQHLLQLTVWGIKQLQARVLAVERYLRDQQLLGIWGCSGKLICTTTVPWNTSWSNKSLDKIWNNMTWMEWEREIDNYTSLIYTLLEESQNQQEKNEQELLELDKWASLWNWFSITNWLWYIRIFIMIVGGLIGLRIIFAVLSIVNRVRQGYSPLSFQTLIPAQRGPDRPEGIEEGGGERDRDRSTRLVNGFLALFWDDLRSLCLFSYHRLTDLLLIVARIVELLGRRGWEVLKYWWNLLLYWSQELKNSAVSLLNATAIAVAEGTDRVIEVVQRVGRAILHIPTRIRQGFERALL.

The signal sequence occupies residues 1–31 (MRARETRKNYQCLWRWGTMLLGMLMICSAAE). The Extracellular segment spans residues 32–680 (NLWVTVYYGV…ITNWLWYIRI (649 aa)). Cys-53 and Cys-73 are disulfide-bonded. N-linked (GlcNAc...) asparagine; by host glycosylation is found at Asn-87, Asn-129, Asn-136, Asn-141, Asn-142, Asn-155, Asn-159, Asn-189, and Asn-198. Intrachain disulfides connect Cys-118/Cys-206, Cys-125/Cys-197, Cys-130/Cys-156, Cys-219/Cys-248, and Cys-229/Cys-240. A V1 region spans residues 130-155 (CTDYLGNATNTNNSSGGTVEKEEIKN). Residues 156-197 (CSFNITTGIRDKVQKAYAYFYKLDVVPIDDDNTNTSYRLIHC) are V2. Residues Asn-242, Asn-263, Asn-277, Asn-290, and Asn-296 are each glycosylated (N-linked (GlcNAc...) asparagine; by host). The tract at residues 297–330 (CTRPNNNRRRRITSGPGKVLYTTGEIIGDIRKAY) is V3. Cys-297 and Cys-331 are disulfide-bonded. N-linked (GlcNAc...) asparagine; by host glycosylation is found at Asn-332, Asn-339, and Asn-355. The interval 363–373 (SSGGDPEIVMH) is CD4-binding loop. Cystine bridges form between Cys-377/Cys-439 and Cys-384/Cys-412. The segment at 384–412 (CNTTKLFNSTWNENSTWNATGNDTITLPC) is V4. 7 N-linked (GlcNAc...) asparagine; by host glycosylation sites follow: Asn-385, Asn-391, Asn-397, Asn-401, Asn-405, Asn-442, and Asn-457. V5 stretches follow at residues 455 to 466 (DKNSTTEIFRPA) and 457 to 466 (NSTTEIFRPA). The segment at 507–528 (AVGVIGAMFLGFLGAAGSTMGA) is fusion peptide. An immunosuppression region spans residues 570–588 (KQLQARVLAVERYLRDQQL). An intrachain disulfide couples Cys-594 to Cys-600. Residues Asn-607, Asn-612, Asn-621, and Asn-633 are each glycosylated (N-linked (GlcNAc...) asparagine; by host). Residues 629–663 (REIDNYTSLIYTLLEESQNQQEKNEQELLELDKWA) adopt a coiled-coil conformation. The interval 658-679 (ELDKWASLWNWFSITNWLWYIR) is MPER; binding to GalCer. The helical transmembrane segment at 681–701 (FIMIVGGLIGLRIIFAVLSIV) threads the bilayer. Over 702-852 (NRVRQGYSPL…IRQGFERALL (151 aa)) the chain is Cytoplasmic. The YXXL motif; contains endocytosis signal motif lies at 708–711 (YSPL). The tract at residues 717-739 (IPAQRGPDRPEGIEEGGGERDRD) is disordered. Positions 722 to 739 (GPDRPEGIEEGGGERDRD) are enriched in basic and acidic residues. Cys-760 is lipidated: S-palmitoyl cysteine; by host. The Di-leucine internalization motif motif lies at 851-852 (LL).

It belongs to the HIV-1 env protein family. The mature envelope protein (Env) consists of a homotrimer of non-covalently associated gp120-gp41 heterodimers. The resulting complex protrudes from the virus surface as a spike. There seems to be as few as 10 spikes on the average virion. Interacts with host CD4, CCR5 and CXCR4. Gp120 also interacts with the C-type lectins CD209/DC-SIGN and CLEC4M/DC-SIGNR (collectively referred to as DC-SIGN(R)). Gp120 and gp41 interact with GalCer. Gp120 interacts with host ITGA4/ITGB7 complex; on CD4+ T-cells, this interaction results in rapid activation of integrin ITGAL/LFA-1, which facilitates efficient cell-to-cell spreading of HIV-1. Gp120 interacts with cell-associated heparan sulfate; this interaction increases virus infectivity on permissive cells and may be involved in infection of CD4- cells. As to quaternary structure, the mature envelope protein (Env) consists of a homotrimer of non-covalently associated gp120-gp41 heterodimers. The resulting complex protrudes from the virus surface as a spike. There seems to be as few as 10 spikes on the average virion. In terms of processing, highly glycosylated by host. The high number of glycan on the protein is reffered to as 'glycan shield' because it contributes to hide protein sequence from adaptive immune system. Post-translationally, palmitoylation of the transmembrane protein and of Env polyprotein (prior to its proteolytic cleavage) is essential for their association with host cell membrane lipid rafts. Palmitoylation is therefore required for envelope trafficking to classical lipid rafts, but not for viral replication. Specific enzymatic cleavages in vivo yield mature proteins. Envelope glycoproteins are synthesized as an inactive precursor that is heavily N-glycosylated and processed likely by host cell furin in the Golgi to yield the mature SU and TM proteins. The cleavage site between SU and TM requires the minimal sequence [KR]-X-[KR]-R. About 2 of the 9 disulfide bonds of gp41 are reduced by P4HB/PDI, following binding to CD4 receptor.

It localises to the virion membrane. It is found in the host cell membrane. Its subcellular location is the host endosome membrane. Its function is as follows. Oligomerizes in the host endoplasmic reticulum into predominantly trimers. In a second time, gp160 transits in the host Golgi, where glycosylation is completed. The precursor is then proteolytically cleaved in the trans-Golgi and thereby activated by cellular furin or furin-like proteases to produce gp120 and gp41. In terms of biological role, attaches the virus to the host lymphoid cell by binding to the primary receptor CD4. This interaction induces a structural rearrangement creating a high affinity binding site for a chemokine coreceptor like CXCR4 and/or CCR5. Acts as a ligand for CD209/DC-SIGN and CLEC4M/DC-SIGNR, which are respectively found on dendritic cells (DCs), and on endothelial cells of liver sinusoids and lymph node sinuses. These interactions allow capture of viral particles at mucosal surfaces by these cells and subsequent transmission to permissive cells. HIV subverts the migration properties of dendritic cells to gain access to CD4+ T-cells in lymph nodes. Virus transmission to permissive T-cells occurs either in trans (without DCs infection, through viral capture and transmission), or in cis (following DCs productive infection, through the usual CD4-gp120 interaction), thereby inducing a robust infection. In trans infection, bound virions remain infectious over days and it is proposed that they are not degraded, but protected in non-lysosomal acidic organelles within the DCs close to the cell membrane thus contributing to the viral infectious potential during DCs' migration from the periphery to the lymphoid tissues. On arrival at lymphoid tissues, intact virions recycle back to DCs' cell surface allowing virus transmission to CD4+ T-cells. Functionally, acts as a class I viral fusion protein. Under the current model, the protein has at least 3 conformational states: pre-fusion native state, pre-hairpin intermediate state, and post-fusion hairpin state. During fusion of viral and target intracellular membranes, the coiled coil regions (heptad repeats) assume a trimer-of-hairpins structure, positioning the fusion peptide in close proximity to the C-terminal region of the ectodomain. The formation of this structure appears to drive apposition and subsequent fusion of viral and target cell membranes. Complete fusion occurs in host cell endosomes and is dynamin-dependent, however some lipid transfer might occur at the plasma membrane. The virus undergoes clathrin-dependent internalization long before endosomal fusion, thus minimizing the surface exposure of conserved viral epitopes during fusion and reducing the efficacy of inhibitors targeting these epitopes. Membranes fusion leads to delivery of the nucleocapsid into the cytoplasm. The chain is Envelope glycoprotein gp160 from Human immunodeficiency virus type 1 group M subtype B (isolate SF33) (HIV-1).